The sequence spans 793 residues: ClpA homolog protein (793 aa).

Residues 1 to 24 form a disordered region; the sequence is MRPRSNAGSSPPDPEEQEHAQVPS. The region spanning 22 to 168 is the Clp R domain; sequence VPSFSSTLEQ…NFIAHGVAKD (147 aa). Repeat stretches follow at residues 25-88 and 103-168; these read FSST…IDDD and PTAA…VAKD. A disordered region spans residues 169–194; that stretch reads PSYGESRPVQGADEPQETPKAEAGEA. Over residues 185 to 194 the composition is skewed to basic and acidic residues; that stretch reads ETPKAEAGEA. The tract at residues 199-447 is i; the sequence is LSKYCVDLNI…AQHLVSDSKR (249 aa). ATP-binding positions include 244-251 and 525-532; these read GDPGVGKT and GPTGVGKT. Residues 451 to 639 are II; that stretch reads LGTKEIEAVV…ILIMTSNVGA (189 aa).

Belongs to the ClpA/ClpB family.

The chain is ClpA homolog protein from Fuscovulum blasticum (Rhodobacter blasticus).